Reading from the N-terminus, the 166-residue chain is Protein BioX (166 aa).

The next 5 helical transmembrane spans lie at 12–32 (ISLL…TGIP), 33–53 (GSEF…FGFK), 55–75 (YFLA…HSIL), 87–107 (VGLI…AGPI), and 117–137 (AFTL…GMVI).

The protein resides in the cell membrane. Functionally, does not seem to be a permease of pimelate. Its role in biotin synthesis is not clear. In Lysinibacillus sphaericus (Bacillus sphaericus), this protein is Protein BioX (bioX).